Consider the following 130-residue polypeptide: UPF0102 protein TDE_2303 (130 aa).

It belongs to the UPF0102 family.

The polypeptide is UPF0102 protein TDE_2303 (Treponema denticola (strain ATCC 35405 / DSM 14222 / CIP 103919 / JCM 8153 / KCTC 15104)).